The sequence spans 220 residues: Peptide methionine sulfoxide reductase MsrA (220 aa).

The active site involves Cys-59.

It belongs to the MsrA Met sulfoxide reductase family.

It carries out the reaction L-methionyl-[protein] + [thioredoxin]-disulfide + H2O = L-methionyl-(S)-S-oxide-[protein] + [thioredoxin]-dithiol. It catalyses the reaction [thioredoxin]-disulfide + L-methionine + H2O = L-methionine (S)-S-oxide + [thioredoxin]-dithiol. Has an important function as a repair enzyme for proteins that have been inactivated by oxidation. Catalyzes the reversible oxidation-reduction of methionine sulfoxide in proteins to methionine. The protein is Peptide methionine sulfoxide reductase MsrA of Corynebacterium kroppenstedtii (strain DSM 44385 / JCM 11950 / CIP 105744 / CCUG 35717).